We begin with the raw amino-acid sequence, 610 residues long: Dihydroxy-acid dehydratase (610 aa).

Asp-81 lines the Mg(2+) pocket. Cys-122 provides a ligand contact to [2Fe-2S] cluster. Mg(2+)-binding residues include Asp-123 and Lys-124. Lys-124 is modified (N6-carboxylysine). Cys-193 contacts [2Fe-2S] cluster. Residue Glu-489 participates in Mg(2+) binding. The active-site Proton acceptor is the Ser-515.

It belongs to the IlvD/Edd family. In terms of assembly, homodimer. The cofactor is [2Fe-2S] cluster. Requires Mg(2+) as cofactor.

It catalyses the reaction (2R)-2,3-dihydroxy-3-methylbutanoate = 3-methyl-2-oxobutanoate + H2O. The catalysed reaction is (2R,3R)-2,3-dihydroxy-3-methylpentanoate = (S)-3-methyl-2-oxopentanoate + H2O. The protein operates within amino-acid biosynthesis; L-isoleucine biosynthesis; L-isoleucine from 2-oxobutanoate: step 3/4. Its pathway is amino-acid biosynthesis; L-valine biosynthesis; L-valine from pyruvate: step 3/4. Functionally, functions in the biosynthesis of branched-chain amino acids. Catalyzes the dehydration of (2R,3R)-2,3-dihydroxy-3-methylpentanoate (2,3-dihydroxy-3-methylvalerate) into 2-oxo-3-methylpentanoate (2-oxo-3-methylvalerate) and of (2R)-2,3-dihydroxy-3-methylbutanoate (2,3-dihydroxyisovalerate) into 2-oxo-3-methylbutanoate (2-oxoisovalerate), the penultimate precursor to L-isoleucine and L-valine, respectively. This chain is Dihydroxy-acid dehydratase, found in Xylella fastidiosa (strain M23).